An 861-amino-acid chain; its full sequence is DNA mismatch repair protein MutS (861 aa).

618–625 is a binding site for ATP; sequence GPNMGGKS.

The protein belongs to the DNA mismatch repair MutS family.

This protein is involved in the repair of mismatches in DNA. It is possible that it carries out the mismatch recognition step. This protein has a weak ATPase activity. This is DNA mismatch repair protein MutS from Shewanella sp. (strain ANA-3).